We begin with the raw amino-acid sequence, 830 residues long: Periplasmic nitrate reductase (830 aa).

The tat-type signal signal peptide spans 1 to 30 (MTTRREFIKRSAAVTAACTAGISLSGEASN). Positions 40-96 (LKWSKAPCRFCGTGCSVNVAVKDNQVVATHGDIQSEVNRGLNCVKGYFLSKIMYGKD) constitute a 4Fe-4S Mo/W bis-MGD-type domain. 4 residues coordinate [4Fe-4S] cluster: Cys-47, Cys-50, Cys-54, and Cys-82. Mo-bis(molybdopterin guanine dinucleotide)-binding positions include Lys-84, Gln-151, Asn-176, Cys-180, 213–220 (WGSNMAEM), 244–248 (STFQH), Met-374, Gln-378, Asn-484, 510–511 (SE), Lys-533, Asp-560, and 720–729 (TGRVLEHWHS). Position 796 (Trp-796) interacts with substrate. Mo-bis(molybdopterin guanine dinucleotide) contacts are provided by Asn-804 and Lys-821.

Belongs to the prokaryotic molybdopterin-containing oxidoreductase family. NasA/NapA/NarB subfamily. Component of the periplasmic nitrate reductase NapAB complex composed of NapA and NapB. The cofactor is [4Fe-4S] cluster. Requires Mo-bis(molybdopterin guanine dinucleotide) as cofactor. Post-translationally, predicted to be exported by the Tat system. The position of the signal peptide cleavage has not been experimentally proven.

The protein localises to the periplasm. It carries out the reaction 2 Fe(II)-[cytochrome] + nitrate + 2 H(+) = 2 Fe(III)-[cytochrome] + nitrite + H2O. Its function is as follows. Catalytic subunit of the periplasmic nitrate reductase complex NapAB. Receives electrons from NapB and catalyzes the reduction of nitrate to nitrite. The chain is Periplasmic nitrate reductase from Hahella chejuensis (strain KCTC 2396).